The primary structure comprises 152 residues: B3 domain-containing protein At1g10455 (152 aa).

Residues 24–131 (LKKKLSDSDL…EVKFKHFKSQ (108 aa)) constitute a DNA-binding region (TF-B3).

Its subcellular location is the nucleus. The chain is B3 domain-containing protein At1g10455 from Arabidopsis thaliana (Mouse-ear cress).